Here is a 316-residue protein sequence, read N- to C-terminus: Large ribosomal subunit protein uL10 (316 aa).

Positions 282 to 316 (ASAAKADEPKKEEAKKVEEEEEEEEDGFMGFGMFD) are disordered. Over residues 286 to 299 (KADEPKKEEAKKVE) the composition is skewed to basic and acidic residues.

This sequence belongs to the universal ribosomal protein uL10 family. P0 forms a pentameric complex by interaction with dimers of P1 and P2. Phosphorylated.

Functionally, ribosomal protein P0 is the functional equivalent of E.coli protein L10. The protein is Large ribosomal subunit protein uL10 (RPLP0) of Plasmodium falciparum (isolate 7G8).